Consider the following 424-residue polypeptide: Serine--tRNA ligase (424 aa).

233-235 (TAE) is an L-serine binding site. 264–266 (RRE) serves as a coordination point for ATP. E287 contacts L-serine. 351–354 (EISS) lines the ATP pocket. S387 contacts L-serine.

The protein belongs to the class-II aminoacyl-tRNA synthetase family. Type-1 seryl-tRNA synthetase subfamily. Homodimer. The tRNA molecule binds across the dimer.

Its subcellular location is the cytoplasm. The enzyme catalyses tRNA(Ser) + L-serine + ATP = L-seryl-tRNA(Ser) + AMP + diphosphate + H(+). It carries out the reaction tRNA(Sec) + L-serine + ATP = L-seryl-tRNA(Sec) + AMP + diphosphate + H(+). It participates in aminoacyl-tRNA biosynthesis; selenocysteinyl-tRNA(Sec) biosynthesis; L-seryl-tRNA(Sec) from L-serine and tRNA(Sec): step 1/1. Its function is as follows. Catalyzes the attachment of serine to tRNA(Ser). Is also able to aminoacylate tRNA(Sec) with serine, to form the misacylated tRNA L-seryl-tRNA(Sec), which will be further converted into selenocysteinyl-tRNA(Sec). This is Serine--tRNA ligase from Cyanothece sp. (strain PCC 7425 / ATCC 29141).